A 664-amino-acid polypeptide reads, in one-letter code: DNA ligase (664 aa).

Residues 32–36 (DKEYD) and 80–81 (SL) contribute to the NAD(+) site. The active-site N6-AMP-lysine intermediate is K122. NAD(+) contacts are provided by R144, E178, and K314. Zn(2+)-binding residues include C407, C410, C423, and C429. The BRCT domain occupies 587 to 664 (IDENPFMGKT…NEEEFSNKIK (78 aa)).

Belongs to the NAD-dependent DNA ligase family. LigA subfamily. Mg(2+) serves as cofactor. Mn(2+) is required as a cofactor.

The catalysed reaction is NAD(+) + (deoxyribonucleotide)n-3'-hydroxyl + 5'-phospho-(deoxyribonucleotide)m = (deoxyribonucleotide)n+m + AMP + beta-nicotinamide D-nucleotide.. In terms of biological role, DNA ligase that catalyzes the formation of phosphodiester linkages between 5'-phosphoryl and 3'-hydroxyl groups in double-stranded DNA using NAD as a coenzyme and as the energy source for the reaction. It is essential for DNA replication and repair of damaged DNA. The chain is DNA ligase from Clostridium botulinum (strain 657 / Type Ba4).